The primary structure comprises 259 residues: Acyl-[acyl-carrier-protein]--UDP-N-acetylglucosamine O-acyltransferase (259 aa).

It belongs to the transferase hexapeptide repeat family. LpxA subfamily. As to quaternary structure, homotrimer.

The protein resides in the cytoplasm. The enzyme catalyses a (3R)-hydroxyacyl-[ACP] + UDP-N-acetyl-alpha-D-glucosamine = a UDP-3-O-[(3R)-3-hydroxyacyl]-N-acetyl-alpha-D-glucosamine + holo-[ACP]. The protein operates within glycolipid biosynthesis; lipid IV(A) biosynthesis; lipid IV(A) from (3R)-3-hydroxytetradecanoyl-[acyl-carrier-protein] and UDP-N-acetyl-alpha-D-glucosamine: step 1/6. Its function is as follows. Involved in the biosynthesis of lipid A, a phosphorylated glycolipid that anchors the lipopolysaccharide to the outer membrane of the cell. The protein is Acyl-[acyl-carrier-protein]--UDP-N-acetylglucosamine O-acyltransferase of Akkermansia muciniphila (strain ATCC BAA-835 / DSM 22959 / JCM 33894 / BCRC 81048 / CCUG 64013 / CIP 107961 / Muc).